We begin with the raw amino-acid sequence, 396 residues long: Mannonate dehydratase (396 aa).

The protein belongs to the mannonate dehydratase family. Fe(2+) is required as a cofactor. Requires Mn(2+) as cofactor.

The enzyme catalyses D-mannonate = 2-dehydro-3-deoxy-D-gluconate + H2O. Its pathway is carbohydrate metabolism; pentose and glucuronate interconversion. In terms of biological role, catalyzes the dehydration of D-mannonate. In Yersinia enterocolitica serotype O:8 / biotype 1B (strain NCTC 13174 / 8081), this protein is Mannonate dehydratase.